The following is a 737-amino-acid chain: Zinc finger protein 280C (737 aa).

Residues K5, K10, K14, K33, and K55 each participate in a glycyl lysine isopeptide (Lys-Gly) (interchain with G-Cter in SUMO2) cross-link. Over residues 57–66 the composition is skewed to polar residues; that stretch reads AISNILNRGH. Residues 57–137 are disordered; sequence AISNILNRGH…DFTKNSQVGS (81 aa). A Glycyl lysine isopeptide (Lys-Gly) (interchain with G-Cter in SUMO2) cross-link involves residue K75. S80 carries the phosphoserine modification. A compositionally biased stretch (polar residues) spans 112 to 123; the sequence is SKSSQSSVTVEN. Residues K113, K126, K167, K174, K180, and K187 each participate in a glycyl lysine isopeptide (Lys-Gly) (interchain with G-Cter in SUMO2) cross-link. Positions 176 to 185 are enriched in polar residues; it reads PSTSKVNSVT. Residues 176–223 form a disordered region; that stretch reads PSTSKVNSVTPKKPKTSEDVPQINPSTSLPLIGSPPVTSSQVMLSKGT. The span at 211–223 shows a compositional bias: polar residues; it reads PVTSSQVMLSKGT. Position 223 is a phosphothreonine (T223). S227 is modified (phosphoserine). A Glycyl lysine isopeptide (Lys-Gly) (interchain with G-Cter in SUMO2) cross-link involves residue K273. 5 consecutive C2H2-type zinc fingers follow at residues 316-338, 353-376, 383-406, 413-436, and 470-492; these read FKCF…MKHH, TTCQ…ESTH, TICK…KDTH, YVCQ…RAAH, and HRCP…KAQH. K522 is covalently cross-linked (Glycyl lysine isopeptide (Lys-Gly) (interchain with G-Cter in SUMO2)). Residues 535–579 show a composition bias toward polar residues; it reads SFLQVTPPTSQNTTARNPRKSNASRSKTSKLHATTSTASKVNTSK. The disordered stretch occupies residues 535–602; it reads SFLQVTPPTS…YKQKRQRNRK (68 aa). T540 carries the phosphothreonine modification. Glycyl lysine isopeptide (Lys-Gly) (interchain with G-Cter in SUMO2) cross-links involve residues K564 and K574. Basic residues predominate over residues 580–602; it reads PRGRIAKSKAKPSYKQKRQRNRK.

The protein resides in the nucleus. In terms of biological role, may function as a transcription factor. The protein is Zinc finger protein 280C (ZNF280C) of Homo sapiens (Human).